Consider the following 252-residue polypeptide: 2-succinyl-6-hydroxy-2,4-cyclohexadiene-1-carboxylate synthase (252 aa).

The protein belongs to the AB hydrolase superfamily. MenH family. As to quaternary structure, monomer.

It carries out the reaction 5-enolpyruvoyl-6-hydroxy-2-succinyl-cyclohex-3-ene-1-carboxylate = (1R,6R)-6-hydroxy-2-succinyl-cyclohexa-2,4-diene-1-carboxylate + pyruvate. The protein operates within quinol/quinone metabolism; 1,4-dihydroxy-2-naphthoate biosynthesis; 1,4-dihydroxy-2-naphthoate from chorismate: step 3/7. It functions in the pathway quinol/quinone metabolism; menaquinone biosynthesis. In terms of biological role, catalyzes a proton abstraction reaction that results in 2,5-elimination of pyruvate from 2-succinyl-5-enolpyruvyl-6-hydroxy-3-cyclohexene-1-carboxylate (SEPHCHC) and the formation of 2-succinyl-6-hydroxy-2,4-cyclohexadiene-1-carboxylate (SHCHC). The sequence is that of 2-succinyl-6-hydroxy-2,4-cyclohexadiene-1-carboxylate synthase from Escherichia coli O81 (strain ED1a).